The primary structure comprises 300 residues: MKKNKIVFIFGPTAVGKSDILFNFPKGIAEVINVDSIQVYKEFDIASCKPSVELRSHIKHHLVDFLEPIEEYNLGVFYKEASKIIKNLRDQDKLPVFVGGSAFYFKHLQYGLPSTPPVSSEIRFYVNSLFTTRGKDYLLEELKRVDFERYESISENDIYRIRRSLEVYYQTGIPISQFLKKGQMIEDVLAIGLKRPMEEMRSRIISRVGNMIDCGLLEEIKSLLGKGYDETTPAFKGIGYREFLLWKSRPYSMLNDIIDLIVKNSFLYVKRQMTFFDKIPNVLWFHPDDDLRDILDLIFV.

11-18 provides a ligand contact to ATP; the sequence is GPTAVGKS. 13 to 18 provides a ligand contact to substrate; the sequence is TAVGKS. The interval 35–38 is interaction with substrate tRNA; it reads DSIQ.

It belongs to the IPP transferase family. Monomer. Mg(2+) serves as cofactor.

It carries out the reaction adenosine(37) in tRNA + dimethylallyl diphosphate = N(6)-dimethylallyladenosine(37) in tRNA + diphosphate. Catalyzes the transfer of a dimethylallyl group onto the adenine at position 37 in tRNAs that read codons beginning with uridine, leading to the formation of N6-(dimethylallyl)adenosine (i(6)A). The polypeptide is tRNA dimethylallyltransferase (Borrelia turicatae (strain 91E135)).